Reading from the N-terminus, the 246-residue chain is Small ribosomal subunit protein uS2 (246 aa).

Residues 224–246 (AKQGEESAETEAKEAETTETTTA) form a disordered region. Residues 225 to 239 (KQGEESAETEAKEAE) are compositionally biased toward basic and acidic residues.

The protein belongs to the universal ribosomal protein uS2 family.

The chain is Small ribosomal subunit protein uS2 from Bacillus licheniformis (strain ATCC 14580 / DSM 13 / JCM 2505 / CCUG 7422 / NBRC 12200 / NCIMB 9375 / NCTC 10341 / NRRL NRS-1264 / Gibson 46).